A 508-amino-acid chain; its full sequence is Photosystem II CP47 reaction center protein (508 aa).

6 consecutive transmembrane segments (helical) span residues 21–36 (SVHI…WAGS), 101–115 (IVFS…IWHW), 140–156 (GIHL…FGAF), 203–218 (IAAG…FHLS), 237–252 (VLSS…AFVV), and 457–472 (SFAL…HGAR).

It belongs to the PsbB/PsbC family. PsbB subfamily. As to quaternary structure, PSII is composed of 1 copy each of membrane proteins PsbA, PsbB, PsbC, PsbD, PsbE, PsbF, PsbH, PsbI, PsbJ, PsbK, PsbL, PsbM, PsbT, PsbX, PsbY, PsbZ, Psb30/Ycf12, at least 3 peripheral proteins of the oxygen-evolving complex and a large number of cofactors. It forms dimeric complexes. The cofactor is Binds multiple chlorophylls. PSII binds additional chlorophylls, carotenoids and specific lipids..

Its subcellular location is the plastid. It localises to the chloroplast thylakoid membrane. In terms of biological role, one of the components of the core complex of photosystem II (PSII). It binds chlorophyll and helps catalyze the primary light-induced photochemical processes of PSII. PSII is a light-driven water:plastoquinone oxidoreductase, using light energy to abstract electrons from H(2)O, generating O(2) and a proton gradient subsequently used for ATP formation. In Gossypium barbadense (Sea Island cotton), this protein is Photosystem II CP47 reaction center protein.